The following is a 151-amino-acid chain: ATP synthase subunit b' (151 aa).

Residues 18-38 (TLPLMALQVVLLTFILNALFF) form a helical membrane-spanning segment.

Belongs to the ATPase B chain family. F-type ATPases have 2 components, F(1) - the catalytic core - and F(0) - the membrane proton channel. F(1) has five subunits: alpha(3), beta(3), gamma(1), delta(1), epsilon(1). F(0) has four main subunits: a(1), b(1), b'(1) and c(10-14). The alpha and beta chains form an alternating ring which encloses part of the gamma chain. F(1) is attached to F(0) by a central stalk formed by the gamma and epsilon chains, while a peripheral stalk is formed by the delta, b and b' chains.

The protein resides in the cellular thylakoid membrane. Its function is as follows. F(1)F(0) ATP synthase produces ATP from ADP in the presence of a proton or sodium gradient. F-type ATPases consist of two structural domains, F(1) containing the extramembraneous catalytic core and F(0) containing the membrane proton channel, linked together by a central stalk and a peripheral stalk. During catalysis, ATP synthesis in the catalytic domain of F(1) is coupled via a rotary mechanism of the central stalk subunits to proton translocation. Functionally, component of the F(0) channel, it forms part of the peripheral stalk, linking F(1) to F(0). The b'-subunit is a diverged and duplicated form of b found in plants and photosynthetic bacteria. In Prochlorococcus marinus (strain MIT 9313), this protein is ATP synthase subunit b'.